Reading from the N-terminus, the 367-residue chain is Probable butyrate kinase (367 aa).

It belongs to the acetokinase family.

The protein localises to the cytoplasm. It carries out the reaction butanoate + ATP = butanoyl phosphate + ADP. The polypeptide is Probable butyrate kinase (Bacillus cereus (strain ATCC 10987 / NRS 248)).